Here is a 333-residue protein sequence, read N- to C-terminus: Adenosine deaminase (333 aa).

The Zn(2+) site is built by His12 and His14. The substrate site is built by His14, Asp16, and Gly170. His197 provides a ligand contact to Zn(2+). The active-site Proton donor is Glu200. Residue Asp278 participates in Zn(2+) binding. Asp279 lines the substrate pocket.

This sequence belongs to the metallo-dependent hydrolases superfamily. Adenosine and AMP deaminases family. Adenosine deaminase subfamily. Zn(2+) is required as a cofactor.

The enzyme catalyses adenosine + H2O + H(+) = inosine + NH4(+). The catalysed reaction is 2'-deoxyadenosine + H2O + H(+) = 2'-deoxyinosine + NH4(+). Catalyzes the hydrolytic deamination of adenosine and 2-deoxyadenosine. This chain is Adenosine deaminase, found in Escherichia coli O81 (strain ED1a).